Consider the following 417-residue polypeptide: Putative transporter AmpG 1 (417 aa).

12 helical membrane-spanning segments follow: residues 7 to 27 (LCII…TGNT), 42 to 62 (IGIL…APIF), 78 to 98 (LSWI…FSFL), 104 to 124 (LLLF…QDTI), 143 to 163 (GIYI…AIYL), 171 to 191 (EIYK…IVGI), 225 to 245 (ALKP…LVLY), 273 to 293 (VGKF…GVIM), 301 to 321 (SIFL…FLEI), 328 to 348 (LLFI…TAYI), 366 to 386 (FLSS…GYMV), and 389 to 409 (FGWQ…LLIL).

This sequence belongs to the major facilitator superfamily.

It is found in the cell inner membrane. The polypeptide is Putative transporter AmpG 1 (ampG1) (Rickettsia conorii (strain ATCC VR-613 / Malish 7)).